The chain runs to 123 residues: Putative EG45-like domain containing protein 1 (123 aa).

The first 21 residues, 1-21 (MSKSIVFFSTVLVFLFSFSYA), serve as a signal peptide directing secretion. Residues 24-123 (GIATFYTSYT…AGIINIDYFP (100 aa)) enclose the Expansin-like EG45 domain.

The protein resides in the secreted. Functionally, might have a systemic role in water and solute homeostasis. This Arabidopsis thaliana (Mouse-ear cress) protein is Putative EG45-like domain containing protein 1 (EGC1).